The following is an 894-amino-acid chain: Alanine--tRNA ligase (894 aa).

The Zn(2+) site is built by histidine 569, histidine 573, cysteine 683, and histidine 687.

Belongs to the class-II aminoacyl-tRNA synthetase family. Zn(2+) is required as a cofactor.

It is found in the cytoplasm. It carries out the reaction tRNA(Ala) + L-alanine + ATP = L-alanyl-tRNA(Ala) + AMP + diphosphate. Functionally, catalyzes the attachment of alanine to tRNA(Ala) in a two-step reaction: alanine is first activated by ATP to form Ala-AMP and then transferred to the acceptor end of tRNA(Ala). Also edits incorrectly charged Ser-tRNA(Ala) and Gly-tRNA(Ala) via its editing domain. The polypeptide is Alanine--tRNA ligase (Chloroflexus aurantiacus (strain ATCC 29366 / DSM 635 / J-10-fl)).